The following is a 164-amino-acid chain: General odorant-binding protein 1 (164 aa).

A signal peptide spans 1 to 18 (MWKLVVVLTVNLLQGALT). Intrachain disulfides connect Cys37–Cys72, Cys68–Cys126, and Cys115–Cys135.

This sequence belongs to the PBP/GOBP family. As to quaternary structure, homodimer. In terms of tissue distribution, antenna.

Its function is as follows. Present in the aqueous fluid surrounding olfactory sensory dendrites and are thought to aid in the capture and transport of hydrophobic odorants into and through this fluid. In Bombyx mori (Silk moth), this protein is General odorant-binding protein 1.